The following is a 235-amino-acid chain: Purine nucleoside phosphorylase DeoD-type (235 aa).

His4 is an a purine D-ribonucleoside binding site. Residues Gly20, Arg24, Arg43, and 87–90 (RVGT) contribute to the phosphate site. Residues 179 to 181 (EME) and 203 to 204 (SD) contribute to the a purine D-ribonucleoside site. The active-site Proton donor is Asp204.

Belongs to the PNP/UDP phosphorylase family. In terms of assembly, homohexamer; trimer of homodimers.

The enzyme catalyses a purine D-ribonucleoside + phosphate = a purine nucleobase + alpha-D-ribose 1-phosphate. It carries out the reaction a purine 2'-deoxy-D-ribonucleoside + phosphate = a purine nucleobase + 2-deoxy-alpha-D-ribose 1-phosphate. Functionally, catalyzes the reversible phosphorolytic breakdown of the N-glycosidic bond in the beta-(deoxy)ribonucleoside molecules, with the formation of the corresponding free purine bases and pentose-1-phosphate. The sequence is that of Purine nucleoside phosphorylase DeoD-type from Exiguobacterium sibiricum (strain DSM 17290 / CCUG 55495 / CIP 109462 / JCM 13490 / 255-15).